A 72-amino-acid polypeptide reads, in one-letter code: Translation initiation factor IF-1 (72 aa).

An S1-like domain is found at methionine 1–lysine 72.

This sequence belongs to the IF-1 family. In terms of assembly, component of the 30S ribosomal translation pre-initiation complex which assembles on the 30S ribosome in the order IF-2 and IF-3, IF-1 and N-formylmethionyl-tRNA(fMet); mRNA recruitment can occur at any time during PIC assembly.

The protein resides in the cytoplasm. Its function is as follows. One of the essential components for the initiation of protein synthesis. Stabilizes the binding of IF-2 and IF-3 on the 30S subunit to which N-formylmethionyl-tRNA(fMet) subsequently binds. Helps modulate mRNA selection, yielding the 30S pre-initiation complex (PIC). Upon addition of the 50S ribosomal subunit IF-1, IF-2 and IF-3 are released leaving the mature 70S translation initiation complex. The sequence is that of Translation initiation factor IF-1 from Herminiimonas arsenicoxydans.